The primary structure comprises 175 residues: Adenine phosphoribosyltransferase (175 aa).

The protein belongs to the purine/pyrimidine phosphoribosyltransferase family. In terms of assembly, homodimer.

It localises to the cytoplasm. The catalysed reaction is AMP + diphosphate = 5-phospho-alpha-D-ribose 1-diphosphate + adenine. It participates in purine metabolism; AMP biosynthesis via salvage pathway; AMP from adenine: step 1/1. Functionally, catalyzes a salvage reaction resulting in the formation of AMP, that is energically less costly than de novo synthesis. The protein is Adenine phosphoribosyltransferase of Caldicellulosiruptor bescii (strain ATCC BAA-1888 / DSM 6725 / KCTC 15123 / Z-1320) (Anaerocellum thermophilum).